Reading from the N-terminus, the 184-residue chain is uncharacterized protein (184 aa).

A disordered region spans residues 32–52; it reads PCPRSRTQGQSRRSETHTISR.

The protein localises to the mitochondrion. This is an uncharacterized protein from Arabidopsis thaliana (Mouse-ear cress).